Consider the following 25-residue polypeptide: Glucomannokinase (25 aa).

Belongs to the ROK (NagC/XylR) family. Homodimer.

It catalyses the reaction D-glucose + ATP = D-glucose 6-phosphate + ADP + H(+). The enzyme catalyses D-mannose + ATP = D-mannose 6-phosphate + ADP + H(+). The protein operates within carbohydrate degradation; glycolysis; D-glyceraldehyde 3-phosphate and glycerone phosphate from D-glucose: step 1/4. It functions in the pathway carbohydrate metabolism; mannose metabolism. Its activity is regulated as follows. Competitively inhibited by 2-deoxy-glucose. In terms of biological role, the enzyme has great affinity for glucose and mannose. This Segatella bryantii (Prevotella bryantii) protein is Glucomannokinase.